The chain runs to 150 residues: Transcriptional repressor NrdR (150 aa).

A zinc finger spans residues 3–34 (CPFCAFADSKVVDSRPDKEGSTIRRRRECESC). Residues 49–139 (PLVIKKDGRR…VYRSFKDITE (91 aa)) enclose the ATP-cone domain.

Belongs to the NrdR family. Requires Zn(2+) as cofactor.

Negatively regulates transcription of bacterial ribonucleotide reductase nrd genes and operons by binding to NrdR-boxes. The polypeptide is Transcriptional repressor NrdR (Geotalea daltonii (strain DSM 22248 / JCM 15807 / FRC-32) (Geobacter daltonii)).